Consider the following 238-residue polypeptide: MPESQPSSTSEPRVSAHNNGCLPGDDIWTQWRNIFAILTGKMSDEGIEQFRVARDIRNEAADCKRCEDQRDYLLQWSPVIRYLSDNIRQLGGDLSSHNIYCRRCTNRKAGGFDPDFGILLCANEMKDQGHLEDTMAHEMVHAYDHLRFKVDWADNLRHAACTEVLKTSLSGECRWAREFFRRGQWRFTQQHQECVKRRAILSVRARPTCKDEAHAERVVNEVWDSCFRDTRPFDEIYR.

An a divalent metal cation-binding site is contributed by histidine 137. The active site involves glutamate 138. Histidine 141 contacts a divalent metal cation.

This sequence belongs to the peptidase M76 family.

It is found in the mitochondrion inner membrane. In terms of biological role, has a dual role in the assembly of mitochondrial ATPase. Acts as a protease that removes N-terminal residues of mitochondrial ATPase CF(0) subunit 6 at the intermembrane space side. Also involved in the correct assembly of the membrane-embedded ATPase CF(0) particle, probably mediating association of subunit 6 with the subunit 9 ring. The sequence is that of Mitochondrial inner membrane protease atp23 (atp23) from Aspergillus oryzae (strain ATCC 42149 / RIB 40) (Yellow koji mold).